Here is a 160-residue protein sequence, read N- to C-terminus: CXXC motif containing zinc binding protein (160 aa).

Positions 33, 36, 67, and 70 each coordinate Zn(2+).

It belongs to the UPF0587 family.

In Xenopus laevis (African clawed frog), this protein is CXXC motif containing zinc binding protein (czib).